Consider the following 437-residue polypeptide: UDP-N-acetylmuramoylalanine--D-glutamate ligase (437 aa).

112–118 (GSNGKST) serves as a coordination point for ATP.

The protein belongs to the MurCDEF family.

It localises to the cytoplasm. The catalysed reaction is UDP-N-acetyl-alpha-D-muramoyl-L-alanine + D-glutamate + ATP = UDP-N-acetyl-alpha-D-muramoyl-L-alanyl-D-glutamate + ADP + phosphate + H(+). The protein operates within cell wall biogenesis; peptidoglycan biosynthesis. In terms of biological role, cell wall formation. Catalyzes the addition of glutamate to the nucleotide precursor UDP-N-acetylmuramoyl-L-alanine (UMA). This chain is UDP-N-acetylmuramoylalanine--D-glutamate ligase, found in Haemophilus influenzae (strain PittEE).